A 127-amino-acid chain; its full sequence is uncharacterized protein (127 aa).

Residues 1 to 24 (PLKTKPIDNNLPHRTGYNQASKQQ) form a disordered region.

This is an uncharacterized protein from Homo sapiens (Human).